The following is a 270-amino-acid chain: Tetraspanin-2 (270 aa).

Residues 1 to 8 are Cytoplasmic-facing; the sequence is MALANNLT. The chain crosses the membrane as a helical span at residues 9–29; that stretch reads AILNLLALLCSIPITASGIWL. The Extracellular segment spans residues 30–42; that stretch reads ASKPDNECVNLLR. The chain crosses the membrane as a helical span at residues 43 to 63; the sequence is WPVVVLGVLILVVSATGFIGA. The Cytoplasmic portion of the chain corresponds to 64–74; that stretch reads YKYKETLLAVY. Residues 75–95 traverse the membrane as a helical segment; that stretch reads LCCMAILIGLLLVVLIFAFVV. Residues 96 to 232 lie on the Extracellular side of the membrane; the sequence is TRPDGSYRVP…NLRKEWRKAN (137 aa). A helical membrane pass occupies residues 233-253; that stretch reads LILIITVVVLIWVYVIACSAF. Topologically, residues 254–270 are cytoplasmic; the sequence is RNAQTEDLFRKYKQGWV.

It belongs to the tetraspanin (TM4SF) family.

It is found in the membrane. In terms of biological role, may be involved in the regulation of cell differentiation. This is Tetraspanin-2 (TET2) from Arabidopsis thaliana (Mouse-ear cress).